The sequence spans 476 residues: Vitamin D-binding protein (476 aa).

The signal sequence occupies residues 1–16 (MKRVLVLLLALAFGHA). 3 Albumin domains span residues 17–208 (LERG…QMKH), 209–394 (LSLL…LLKR), and 395–476 (QLTS…TLQS). Cystine bridges form between cysteine 29-cysteine 75, cysteine 74-cysteine 83, cysteine 96-cysteine 112, cysteine 111-cysteine 122, cysteine 145-cysteine 190, cysteine 189-cysteine 198, cysteine 220-cysteine 266, cysteine 265-cysteine 273, cysteine 286-cysteine 300, cysteine 299-cysteine 311, cysteine 335-cysteine 376, cysteine 375-cysteine 384, cysteine 407-cysteine 453, and cysteine 452-cysteine 462. Asparagine 288 carries N-linked (GlcNAc...) asparagine glycosylation. Position 434 is a phosphoserine (serine 434).

It belongs to the ALB/AFP/VDB family. As to quaternary structure, associates with membrane-bound immunoglobulin on the surface of B-lymphocytes and with IgG Fc receptor on the membranes of T-lymphocytes. Interacts with LRP2; the interaction is required for renal uptake of GC in complex with 25-hydroxyvitamin D3.

The protein resides in the secreted. Its function is as follows. Involved in vitamin D transport and storage, scavenging of extracellular G-actin, enhancement of the chemotactic activity of C5 alpha for neutrophils in inflammation and macrophage activation. This Mus musculus (Mouse) protein is Vitamin D-binding protein (Gc).